Here is a 121-residue protein sequence, read N- to C-terminus: Large ribosomal subunit protein bL12 (121 aa).

The protein belongs to the bacterial ribosomal protein bL12 family. As to quaternary structure, homodimer. Part of the ribosomal stalk of the 50S ribosomal subunit. Forms a multimeric L10(L12)X complex, where L10 forms an elongated spine to which 2 to 4 L12 dimers bind in a sequential fashion. Binds GTP-bound translation factors.

In terms of biological role, forms part of the ribosomal stalk which helps the ribosome interact with GTP-bound translation factors. Is thus essential for accurate translation. The polypeptide is Large ribosomal subunit protein bL12 (Limosilactobacillus reuteri (strain DSM 20016) (Lactobacillus reuteri)).